The sequence spans 259 residues: Phospholipase YtpA (259 aa).

S88 functions as the Nucleophile in the catalytic mechanism. Catalysis depends on charge relay system residues D206 and H236.

This sequence belongs to the AB hydrolase superfamily.

It participates in antibiotic biosynthesis; bacilysocin biosynthesis. In terms of biological role, phospholipase involved in the biosynthesis of the antibiotic bacilysocin. It probably catalyzes the hydrolysis of the 2-sn-acyl moiety of phosphatidylglycerol to produce bacilysocin (lysophosphatidylglycerol). Is also able to catalyze the hydrolysis reaction of one acyl bond in phosphatidylcholine in vitro (actual cleavage point is unknown), resulting in lysophosphatidylcholine. The protein is Phospholipase YtpA (ytpA) of Bacillus subtilis (strain 168).